The primary structure comprises 426 residues: D-tagatose-1,6-bisphosphate aldolase subunit KbaZ (426 aa).

This sequence belongs to the GatZ/KbaZ family. KbaZ subfamily. In terms of assembly, forms a complex with KbaY.

It functions in the pathway carbohydrate metabolism; D-tagatose 6-phosphate degradation; D-glyceraldehyde 3-phosphate and glycerone phosphate from D-tagatose 6-phosphate: step 2/2. Its function is as follows. Component of the tagatose-1,6-bisphosphate aldolase KbaYZ that is required for full activity and stability of the Y subunit. Could have a chaperone-like function for the proper and stable folding of KbaY. When expressed alone, KbaZ does not show any aldolase activity. The protein is D-tagatose-1,6-bisphosphate aldolase subunit KbaZ of Escherichia coli (strain K12 / MC4100 / BW2952).